The sequence spans 502 residues: UDP-N-acetylmuramate--L-alanine ligase (502 aa).

120 to 126 (GTHGKTS) lines the ATP pocket.

The protein belongs to the MurCDEF family.

It localises to the cytoplasm. It catalyses the reaction UDP-N-acetyl-alpha-D-muramate + L-alanine + ATP = UDP-N-acetyl-alpha-D-muramoyl-L-alanine + ADP + phosphate + H(+). It functions in the pathway cell wall biogenesis; peptidoglycan biosynthesis. Cell wall formation. This is UDP-N-acetylmuramate--L-alanine ligase from Rhodococcus erythropolis (strain PR4 / NBRC 100887).